The chain runs to 93 residues: U12-lycotoxin-Ls1e (93 aa).

The N-terminal stretch at 1 to 18 (MKFAVILLFTLVVLAVAS) is a signal peptide. The propeptide occupies 19–38 (ESVEEDTREIDVEEFQEQQR).

Belongs to the neurotoxin 31 family. Contains 5 disulfide bonds. In terms of tissue distribution, expressed by the venom gland.

The protein localises to the secreted. The chain is U12-lycotoxin-Ls1e from Lycosa singoriensis (Wolf spider).